The chain runs to 378 residues: Chaperone protein DnaJ (378 aa).

The 65-residue stretch at 5-69 (EFYDRLGVSK…QKRAAYDQYG (65 aa)) folds into the J domain. The CR-type zinc finger occupies 135–217 (GTEKEVKYHR…CHGTGHEKQA (83 aa)). Positions 148, 151, 165, 168, 191, 194, 205, and 208 each coordinate Zn(2+). CXXCXGXG motif repeat units follow at residues 148-155 (CRTCNGSG), 165-172 (CGRCHGAG), 191-198 (CDVCHGRG), and 205-212 (CTTCHGTG).

The protein belongs to the DnaJ family. As to quaternary structure, homodimer. Requires Zn(2+) as cofactor.

It localises to the cytoplasm. Participates actively in the response to hyperosmotic and heat shock by preventing the aggregation of stress-denatured proteins and by disaggregating proteins, also in an autonomous, DnaK-independent fashion. Unfolded proteins bind initially to DnaJ; upon interaction with the DnaJ-bound protein, DnaK hydrolyzes its bound ATP, resulting in the formation of a stable complex. GrpE releases ADP from DnaK; ATP binding to DnaK triggers the release of the substrate protein, thus completing the reaction cycle. Several rounds of ATP-dependent interactions between DnaJ, DnaK and GrpE are required for fully efficient folding. Also involved, together with DnaK and GrpE, in the DNA replication of plasmids through activation of initiation proteins. This chain is Chaperone protein DnaJ, found in Streptococcus pneumoniae serotype 4 (strain ATCC BAA-334 / TIGR4).